We begin with the raw amino-acid sequence, 233 residues long: Guanylate kinase (233 aa).

Positions Gly-3–Leu-184 constitute a Guanylate kinase-like domain. Ala-10–Ser-17 is an ATP binding site.

This sequence belongs to the guanylate kinase family.

Its subcellular location is the cytoplasm. It catalyses the reaction GMP + ATP = GDP + ADP. Its function is as follows. Essential for recycling GMP and indirectly, cGMP. The sequence is that of Guanylate kinase from Koribacter versatilis (strain Ellin345).